Consider the following 313-residue polypeptide: Protein OPG185 (313 aa).

Positions Met-1–Ala-16 are cleaved as a signal peptide. Over Thr-17–Asp-274 the chain is Virion surface. Asn-37, Asn-69, Asn-112, Asn-159, Asn-194, and Asn-252 each carry an N-linked (GlcNAc...) asparagine; by host glycan. A helical membrane pass occupies residues Phe-275 to Ile-295. The Intravirion portion of the chain corresponds to Thr-296 to Val-313.

This sequence belongs to the orthopoxvirus OPG185 family. Heterodimerizes with OPG040. The heterodimer OPG185-OPG040 interacts with components of the entry fusion complex OPG143 and OPG094. Heterodimer with C3/VPC protein; disulfide-linked. Glycosylated; contains phosphate and sulfate-substituted glycans. O-glycosylation is required for hemagglutination and hemadsorption activities of infected cell membranes.

It is found in the virion membrane. It localises to the host membrane. Functionally, prevents cell to cell fusion by interacting with and directing the viral OPG040 protein on the host plasma membrane. The OPG185-OPG040 complex associates with components of the entry fusion complex (EFC) presumably to avoid superinfection and syncytium formation. Via its interaction with C3/VCP protein, protects the infected cell and probably also the extracellular enveloped virus from complement attack. The protein is Protein OPG185 (OPG185) of Monkeypox virus.